The following is a 321-amino-acid chain: Ferredoxin--NADP reductase (321 aa).

FAD-binding residues include Asp28, Gln36, Tyr41, Ala81, Phe115, Asp274, and Ser315.

This sequence belongs to the ferredoxin--NADP reductase type 2 family. Homodimer. It depends on FAD as a cofactor.

It catalyses the reaction 2 reduced [2Fe-2S]-[ferredoxin] + NADP(+) + H(+) = 2 oxidized [2Fe-2S]-[ferredoxin] + NADPH. The protein is Ferredoxin--NADP reductase of Frankia alni (strain DSM 45986 / CECT 9034 / ACN14a).